The following is a 244-amino-acid chain: 3-oxoacyl-[acyl-carrier-protein] reductase FabG (244 aa).

NADP(+) is bound by residues 12–15 (GASR) and Thr-37. Ca(2+) is bound by residues Gly-50 and Gly-53. Residues 59–60 (NV) and Asn-86 each bind NADP(+). Substrate is bound at residue Ser-138. Asn-145 provides a ligand contact to Ca(2+). The active-site Proton acceptor is the Tyr-151. NADP(+) contacts are provided by residues 151–155 (YAAAK) and Ile-184. 2 residues coordinate Ca(2+): Glu-233 and Thr-234.

It belongs to the short-chain dehydrogenases/reductases (SDR) family. In terms of assembly, homotetramer.

It carries out the reaction a (3R)-hydroxyacyl-[ACP] + NADP(+) = a 3-oxoacyl-[ACP] + NADPH + H(+). The protein operates within lipid metabolism; fatty acid biosynthesis. Functionally, catalyzes the NADPH-dependent reduction of beta-ketoacyl-ACP substrates to beta-hydroxyacyl-ACP products, the first reductive step in the elongation cycle of fatty acid biosynthesis. The polypeptide is 3-oxoacyl-[acyl-carrier-protein] reductase FabG (fabG) (Salmonella typhi).